Consider the following 443-residue polypeptide: ATP-dependent protease ATPase subunit HslU (443 aa).

ATP is bound by residues Ile18, 60 to 65 (GVGKTE), Asp256, Glu321, and Arg393.

Belongs to the ClpX chaperone family. HslU subfamily. In terms of assembly, a double ring-shaped homohexamer of HslV is capped on each side by a ring-shaped HslU homohexamer. The assembly of the HslU/HslV complex is dependent on binding of ATP.

Its subcellular location is the cytoplasm. Its function is as follows. ATPase subunit of a proteasome-like degradation complex; this subunit has chaperone activity. The binding of ATP and its subsequent hydrolysis by HslU are essential for unfolding of protein substrates subsequently hydrolyzed by HslV. HslU recognizes the N-terminal part of its protein substrates and unfolds these before they are guided to HslV for hydrolysis. The protein is ATP-dependent protease ATPase subunit HslU of Salmonella agona (strain SL483).